Consider the following 123-residue polypeptide: Large ribosomal subunit protein bL12 (123 aa).

Belongs to the bacterial ribosomal protein bL12 family. In terms of assembly, homodimer. Part of the ribosomal stalk of the 50S ribosomal subunit. Forms a multimeric L10(L12)X complex, where L10 forms an elongated spine to which 2 to 4 L12 dimers bind in a sequential fashion. Binds GTP-bound translation factors.

Forms part of the ribosomal stalk which helps the ribosome interact with GTP-bound translation factors. Is thus essential for accurate translation. The chain is Large ribosomal subunit protein bL12 from Rhodospirillum rubrum (strain ATCC 11170 / ATH 1.1.1 / DSM 467 / LMG 4362 / NCIMB 8255 / S1).